The sequence spans 155 residues: Small ribosomal subunit protein uS7cz/uS7cy (155 aa).

Belongs to the universal ribosomal protein uS7 family. In terms of assembly, part of the 30S ribosomal subunit.

Its subcellular location is the plastid. The protein localises to the chloroplast. One of the primary rRNA binding proteins, it binds directly to 16S rRNA where it nucleates assembly of the head domain of the 30S subunit. The sequence is that of Small ribosomal subunit protein uS7cz/uS7cy (rps7-A) from Guizotia abyssinica (Niger).